Reading from the N-terminus, the 202-residue chain is Complement component C8 gamma chain (202 aa).

A signal peptide spans M1–G20. Q21 is modified (pyrrolidone carboxylic acid). A disulfide bridge connects residues C96 and C188.

Belongs to the calycin superfamily. Lipocalin family. Heterotrimer of 3 chains: alpha (C8A), beta (C8B) and gamma (C8G); the alpha and gamma chains are disulfide bonded. Component of the membrane attack complex (MAC), composed of complement C5b, C6, C7, C8A, C8B, C8G and multiple copies of the pore-forming subunit C9.

Its subcellular location is the secreted. The protein resides in the target cell membrane. With respect to regulation, membrane attack complex (MAC) assembly is inhibited by CD59, thereby protecting self-cells from damage during complement activation. MAC assembly is also inhibited by clusterin (CLU) chaperones that inhibit polymerization of C9. In terms of biological role, component of the membrane attack complex (MAC), a multiprotein complex activated by the complement cascade, which inserts into a target cell membrane and forms a pore, leading to target cell membrane rupture and cell lysis. The MAC is initiated by proteolytic cleavage of C5 into complement C5b in response to the classical, alternative, lectin and GZMK complement pathways. The complement pathways consist in a cascade of proteins that leads to phagocytosis and breakdown of pathogens and signaling that strengthens the adaptive immune system. C8G, together with C8A and C8B, inserts into the target membrane, but does not form pores by itself. During MAC assembly, associates with C5b, C6 and C7 to form the C5b8 intermediate complex that inserts into the target membrane and traverses the bilayer increasing membrane rigidity. The protein is Complement component C8 gamma chain of Homo sapiens (Human).